Consider the following 217-residue polypeptide: UPF0502 protein Sfri_1696 (217 aa).

It belongs to the UPF0502 family.

The sequence is that of UPF0502 protein Sfri_1696 from Shewanella frigidimarina (strain NCIMB 400).